The chain runs to 304 residues: Acetylglutamate kinase (304 aa).

Substrate contacts are provided by residues G69–G70, R91, and N202.

It belongs to the acetylglutamate kinase family. ArgB subfamily.

It is found in the cytoplasm. It catalyses the reaction N-acetyl-L-glutamate + ATP = N-acetyl-L-glutamyl 5-phosphate + ADP. It participates in amino-acid biosynthesis; L-arginine biosynthesis; N(2)-acetyl-L-ornithine from L-glutamate: step 2/4. Functionally, catalyzes the ATP-dependent phosphorylation of N-acetyl-L-glutamate. The protein is Acetylglutamate kinase of Caulobacter vibrioides (strain ATCC 19089 / CIP 103742 / CB 15) (Caulobacter crescentus).